The primary structure comprises 283 residues: Glutamate racemase (283 aa).

Substrate contacts are provided by residues 28 to 29 (DS) and 60 to 61 (YG). The active-site Proton donor/acceptor is the Cys92. Residue 93–94 (NT) participates in substrate binding. Cys204 (proton donor/acceptor) is an active-site residue. Position 205–206 (205–206 (TH)) interacts with substrate.

The protein belongs to the aspartate/glutamate racemases family.

The catalysed reaction is L-glutamate = D-glutamate. The protein operates within cell wall biogenesis; peptidoglycan biosynthesis. Functionally, provides the (R)-glutamate required for cell wall biosynthesis. This is Glutamate racemase from Salmonella gallinarum (strain 287/91 / NCTC 13346).